A 722-amino-acid chain; its full sequence is Polyribonucleotide nucleotidyltransferase (722 aa).

2 residues coordinate Mg(2+): aspartate 505 and aspartate 511. The 60-residue stretch at proline 572–valine 631 folds into the KH domain. The 69-residue stretch at glycine 641–lysine 709 folds into the S1 motif domain.

It belongs to the polyribonucleotide nucleotidyltransferase family. As to quaternary structure, component of the RNA degradosome, which is a multiprotein complex involved in RNA processing and mRNA degradation. The cofactor is Mg(2+).

It is found in the cytoplasm. It catalyses the reaction RNA(n+1) + phosphate = RNA(n) + a ribonucleoside 5'-diphosphate. Involved in mRNA degradation. Catalyzes the phosphorolysis of single-stranded polyribonucleotides processively in the 3'- to 5'-direction. In Marinobacter nauticus (strain ATCC 700491 / DSM 11845 / VT8) (Marinobacter aquaeolei), this protein is Polyribonucleotide nucleotidyltransferase.